We begin with the raw amino-acid sequence, 395 residues long: Elongation factor Tu (395 aa).

Residues 10–204 form the tr-type G domain; the sequence is KPHVNIGTIG…AVDSYIPTPQ (195 aa). The tract at residues 19-26 is G1; that stretch reads GHVDHGKT. Position 19–26 (19–26) interacts with GTP; sequence GHVDHGKT. Mg(2+) is bound at residue threonine 26. Positions 60 to 64 are G2; the sequence is GITIN. Positions 81 to 84 are G3; that stretch reads DCPG. GTP contacts are provided by residues 81-85 and 136-139; these read DCPGH and NKCD. The interval 136–139 is G4; it reads NKCD. Positions 174–176 are G5; sequence SAL.

It belongs to the TRAFAC class translation factor GTPase superfamily. Classic translation factor GTPase family. EF-Tu/EF-1A subfamily. As to quaternary structure, monomer.

The protein resides in the cytoplasm. It catalyses the reaction GTP + H2O = GDP + phosphate + H(+). GTP hydrolase that promotes the GTP-dependent binding of aminoacyl-tRNA to the A-site of ribosomes during protein biosynthesis. This Symbiobacterium thermophilum (strain DSM 24528 / JCM 14929 / IAM 14863 / T) protein is Elongation factor Tu.